A 215-amino-acid polypeptide reads, in one-letter code: MNLILMGLPGAGKGTQAAKINEKYNIPHISTGDMFRLAIKEGTELGKKAKEFMDQGDLVPDEVTVGIVKERLAMDDCANGFLLDGFPRTTRQAEELQNLLSDLGKSIDYVIHVDVPEEKLVERLTGRRICPTCGTAYHVVYNPPKEEGICDKDGSQLIQRDDDQPETVKNRLAVNIEQTQPLLDFYQDKGYLVKVNGDRDINVVFQDIESILEKK.

10–15 (GAGKGT) contributes to the ATP binding site. An NMP region spans residues 30–59 (STGDMFRLAIKEGTELGKKAKEFMDQGDLV). AMP is bound by residues Thr-31, Arg-36, 57–59 (DLV), 85–88 (GFPR), and Gln-92. The LID stretch occupies residues 126 to 163 (GRRICPTCGTAYHVVYNPPKEEGICDKDGSQLIQRDDD). Arg-127 provides a ligand contact to ATP. The Zn(2+) site is built by Cys-130, Cys-133, Cys-150, and Asp-153. The AMP site is built by Arg-160 and Arg-171. Position 199 (Arg-199) interacts with ATP.

This sequence belongs to the adenylate kinase family. As to quaternary structure, monomer.

It localises to the cytoplasm. The enzyme catalyses AMP + ATP = 2 ADP. Its pathway is purine metabolism; AMP biosynthesis via salvage pathway; AMP from ADP: step 1/1. Its function is as follows. Catalyzes the reversible transfer of the terminal phosphate group between ATP and AMP. Plays an important role in cellular energy homeostasis and in adenine nucleotide metabolism. This chain is Adenylate kinase, found in Oceanobacillus iheyensis (strain DSM 14371 / CIP 107618 / JCM 11309 / KCTC 3954 / HTE831).